Consider the following 252-residue polypeptide: Triosephosphate isomerase (252 aa).

10–12 (NWK) serves as a coordination point for substrate. Histidine 96 serves as the catalytic Electrophile. Catalysis depends on glutamate 168, which acts as the Proton acceptor. Residues glycine 174, serine 214, and 235–236 (GG) each bind substrate.

It belongs to the triosephosphate isomerase family. Homodimer.

It localises to the cytoplasm. It catalyses the reaction D-glyceraldehyde 3-phosphate = dihydroxyacetone phosphate. It functions in the pathway carbohydrate biosynthesis; gluconeogenesis. Its pathway is carbohydrate degradation; glycolysis; D-glyceraldehyde 3-phosphate from glycerone phosphate: step 1/1. In terms of biological role, involved in the gluconeogenesis. Catalyzes stereospecifically the conversion of dihydroxyacetone phosphate (DHAP) to D-glyceraldehyde-3-phosphate (G3P). The sequence is that of Triosephosphate isomerase from Streptococcus agalactiae serotype Ia (strain ATCC 27591 / A909 / CDC SS700).